We begin with the raw amino-acid sequence, 72 residues long: Antimicrobial peptide MeuNaTxbeta-4 (72 aa).

Residues 1–5 (LIGVK) form the signal peptide. The 63-residue stretch at 7 to 69 (EHGYLLDKYT…LWHYETNKCN (63 aa)) folds into the LCN-type CS-alpha/beta domain. Cystine bridges form between C18-C68, C22-C43, C29-C50, and C33-C52.

Expressed by the venom gland.

The protein localises to the secreted. Functionally, antimicrobial peptide with weak activity against both Gram-positive and -negative bacteria. Its antibiotic activity is potentiated by other antibacterial peptides such as Meucin-49. In Mesobuthus eupeus (Lesser Asian scorpion), this protein is Antimicrobial peptide MeuNaTxbeta-4.